The following is a 142-amino-acid chain: UPF0336 protein PPA1896 (142 aa).

Belongs to the UPF0336 family.

This is UPF0336 protein PPA1896 from Cutibacterium acnes (strain DSM 16379 / KPA171202) (Propionibacterium acnes).